Consider the following 363-residue polypeptide: Transcription factor IIIA (363 aa).

9 consecutive C2H2-type zinc fingers follow at residues 38–62, 68–92, 98–123, 130–154, 160–184, 187–211, 215–237, 244–269, and 275–299; these read FICSFPDCSASYNKAWKLDAHLCKH, FVCDYEGCGKAFIRDYHLSRHILIH, FVCADNGCNQKFSTKSNLKKHIERKH, YVCNFEGCKKAFKKHQQLRTHQCQH, FRCTHEGCGKHFASPSRLKRHGKVH, YLCQKGCSFVGKTWTELLKHTREAH, VTCTVCQKMFKRKDHLKQHMKTH, YRCPREGCARTYTTVFNLQSHILSFH, and FVCEHAGCGKTFAMKQSLMRHSVVH. The disordered stretch occupies residues 301 to 363; sequence PDKKRMKLKV…LAPAALLTVH (63 aa). Positions 338-350 are enriched in low complexity; that stretch reads SLPNSTESSSSPE.

The protein resides in the nucleus. In terms of biological role, involved in ribosomal large subunit biogenesis. Binds the approximately 50 base pairs internal control region (ICR) of 5S ribosomal RNA genes. It is required for their RNA polymerase III-dependent transcription and may also maintain the transcription of other genes. Also binds the transcribed 5S RNA's. This is Transcription factor IIIA (Gtf3a) from Rattus norvegicus (Rat).